The following is a 197-amino-acid chain: RNA polymerase II subunit A C-terminal domain phosphatase ssup-72 (197 aa).

Ser-39 bears the Phosphoserine mark.

This sequence belongs to the SSU72 phosphatase family. As to quaternary structure, may interact with synd-1 (via C-terminus); the interaction may prevent ssup-72 binding to RNA polymerase II ama-1. May interact with RNA polymerase II ama-1. Post-translationally, may be phosphorylated by kin-20. In terms of tissue distribution, expressed in epidermis, intestine and nervous system.

It localises to the nucleus. It catalyses the reaction O-phospho-L-seryl-[protein] + H2O = L-seryl-[protein] + phosphate. The catalysed reaction is O-phospho-L-threonyl-[protein] + H2O = L-threonyl-[protein] + phosphate. Protein phosphatase that dephosphorylates 'Ser-5' of the heptad repeats YSPTSPS in the C-terminal domain of the large RNA polymerase II subunit ama-1. By regulating the phosphorylation status of ama-1 and thus ama-1 binding to specific polyadenylation sites, regulates alternative polyadenylation of pre-mRNAs, including unc-44 and dlk-1 mRNAs. This results in the tissue-specific expression of unc-44 isoforms. This is RNA polymerase II subunit A C-terminal domain phosphatase ssup-72 from Caenorhabditis elegans.